A 546-amino-acid chain; its full sequence is MAWPKLPAPWLLLCTWLPAGCLSLLVTVQHTERYVTLFASIILKCDYTTSAQLQDVVVTWRFKSFCKDPIFDYYSASYQAALSLGQDPSNDCNDNQREVRIVAQRRGQNEPVLGVDYRQRKITIQNRADLVINEVMWWDHGVYYCTIEAPGDTSGDPDKEVKLIVLHWLTVIFIILGALLLLLLIGVCWCQCCPQYCCCYIRCPCCPARCCCPEEALARHRYMKQAQALGPQMMEKPLYWGADRSSQVSSYPMHPLLQRDLSLRSSLPQMPMTQTTNHPPIANGVLEYLEKELRNLNLAQPLPPDLKARFGHPCSMLSSLGSEVVERRFIHLPPLIRDLSSSRRTSDSLHQQWLTPIPSRPWDLREGRRQHHYPDFHQELQDRGPKSWALERRELDPSWSGRHRSSRLNGSPIHWSDRDSLSDVPSSIEARWQPSHPPFRSRCQERPRRPSPRESTQRHGRRRRHRSYSPPLPSGLSSWSSEEDKERQPQSWGAHRRRSHSPHWPEEKPPSYRSLDVTPGKNSRKKGSVERRSEKDSSHSGRSVVI.

An N-terminal signal peptide occupies residues 1-23; the sequence is MAWPKLPAPWLLLCTWLPAGCLS. In terms of domain architecture, Ig-like V-type spans 24 to 162; the sequence is LLVTVQHTER…TSGDPDKEVK (139 aa). Topologically, residues 24-167 are extracellular; sequence LLVTVQHTER…DKEVKLIVLH (144 aa). Cys45 and Cys145 are joined by a disulfide. The helical transmembrane segment at 168–188 threads the bilayer; it reads WLTVIFIILGALLLLLLIGVC. Topologically, residues 189–546 are cytoplasmic; the sequence is WCQCCPQYCC…SSHSGRSVVI (358 aa). The segment at 399 to 546 is disordered; the sequence is WSGRHRSSRL…SSHSGRSVVI (148 aa). Basic and acidic residues predominate over residues 442–457; sequence RCQERPRRPSPRESTQ. Residues 458–467 are compositionally biased toward basic residues; the sequence is RHGRRRRHRS. Residues Ser499 and Ser501 each carry the phosphoserine modification. Residues 527 to 539 show a composition bias toward basic and acidic residues; it reads GSVERRSEKDSSH.

The protein belongs to the immunoglobulin superfamily. LISCH7 family. Homooligomer. Interacts with MARVELD2 and OCLN; the interaction is required to recruit MARVELD2 to tricellular contacts. Interacts (via C-terminus) with TRA2A, TRA2B and SRSF1. Interacts with PLSCR1.

The protein resides in the cell membrane. It is found in the cell junction. The protein localises to the tight junction. It localises to the nucleus. Its subcellular location is the cytoplasm. In terms of biological role, maintains epithelial barrier function by recruiting MARVELD2/tricellulin to tricellular tight junctions (tTJs). Crucial for normal hearing by maintaining the structural and functional integrity of tTJs, which are critical for the survival of auditory neurosensory HCs. Mediates fatty acids and lipoproteins-stimulated CCK/cholecystokinin secretion in the small intestine. In the inner ear, may regulate alternative pre-mRNA splicing via binding to TRA2A, TRA2B and SRSF1. This Pongo abelii (Sumatran orangutan) protein is Immunoglobulin-like domain-containing receptor 1 (ILDR1).